A 551-amino-acid polypeptide reads, in one-letter code: RCC1 and BTB domain-containing protein 2 (551 aa).

6 RCC1 repeats span residues 64–115 (NDEI…VLAT), 117–169 (DGEV…VLTS), 171–222 (GEVF…AVVD), 223–274 (TGEV…VLTD), 276–326 (GQIY…AAKS), and 328–382 (GGHV…TVAE). Residues 394 to 457 (ADLKFLVDGK…LYTDNISLPP (64 aa)) enclose the BTB domain.

Its subcellular location is the cytoplasmic vesicle. It is found in the secretory vesicle. It localises to the acrosome. This chain is RCC1 and BTB domain-containing protein 2 (Rcbtb2), found in Rattus norvegicus (Rat).